The following is a 761-amino-acid chain: Subtilisin-like protease SBT3 (761 aa).

The signal sequence occupies residues 1 to 22; that stretch reads MELLHLLLFSWALSAHLFLALA. Positions 23-112 are excised as a propeptide; sequence QRSTYIVHLD…AYKDRTVEPH (90 aa). The region spanning 26–110 is the Inhibitor I9 domain; sequence TYIVHLDKSL…ISAYKDRTVE (85 aa). A Peptidase S8 domain is found at 116–606; that stretch reads TSDFLKLNPS…AGHVDPNRAL (491 aa). Asp144 serves as the catalytic Charge relay system. A disulfide bridge links Cys170 with Cys181. Asn177 and Asn203 each carry an N-linked (GlcNAc...) (complex) asparagine; alternate glycan. N-linked (GlcNAc...) (paucimannose) asparagine; alternate glycans are attached at residues Asn177 and Asn203. His215 acts as the Charge relay system in catalysis. Asn376 carries an N-linked (GlcNAc...) (paucimannose) asparagine; partial glycan. Cys382 and Cys401 are joined by a disulfide. Residue Ser538 is the Charge relay system of the active site. The segment at 574–598 is disordered; sequence LDNTRKPIKDSDNNKAATPLDMGAG. The span at 575–586 shows a compositional bias: basic and acidic residues; it reads DNTRKPIKDSDN. A disulfide bridge links Cys624 with Cys645. N-linked (GlcNAc...) (complex) asparagine; alternate glycosylation is found at Asn697 and Asn745. Asn697 and Asn745 each carry an N-linked (GlcNAc...) (paucimannose) asparagine; alternate glycan. Residues 756-761 form a necessary for prodomain cleavage and secretion region; that stretch reads PIIEVW.

The protein belongs to the peptidase S8 family. In terms of assembly, homodimer. Propeptide is internally cleaved at Asn-38 and Asp-52 in a pH-dependent manner leading to the dissociation of the propeptide from the catalytic domain and resulting in the release of the active subtilase. Cleavage occurs at pH 5.7 and to a stronger extent at pH 5.2. In terms of tissue distribution, expressed in flowers, cotyledons and leaves with the highest expression in roots.

The protein resides in the secreted. With respect to regulation, inhibited by 1 mM 4-(2-aminoethyl)-benzenesulfonyl fluoride (AEBSF), a general inhibitor of serine proteinases, but not by the more selective serine protease inhibitors N-alpha-tosyl-L-lysinyl-chloromethylketone (TLCK), N-tosyl-L-phenylalaninyl-chloromethylketone (TPCK), leupeptin, aprotinin or benzamidine. Its proteolytic activity is autoinhibited by the non-covalent binding of the propeptide to the catalytic domain. No effect on activity by the addition of CaCl(2) or calcium chelators. Functionally, serine protease. Has preference for Gln in the P1 position and Lys in the P2 position of oligopeptide substrates. Active also with His in the P1 position. Involved in resistance against insects partly by regulating expression of systemic wound response genes and possibly by its post-ingestive activity in the insect gut. Apart from the role in defense, may be involved in regulation of pectin methylesterases (PMEs) activity and pectin methylesterification of the cell wall. In Solanum lycopersicum (Tomato), this protein is Subtilisin-like protease SBT3.